The following is a 426-amino-acid chain: NADH-quinone oxidoreductase subunit H 1 (426 aa).

The next 10 helical transmembrane spans lie at 22–42 (LWAT…VMLM), 91–111 (FLFW…YLVI), 124–144 (IGVL…VMAG), 163–183 (MVSY…MTSL), 206–226 (FIFK…IAMV), 258–278 (LFFL…VTLW), 299–319 (FSVF…IGWV), 331–351 (AIGL…LLIP), 357–377 (VSDI…YIWY), and 392–412 (IGWK…AVLG).

It belongs to the complex I subunit 1 family. NDH-1 is composed of 14 different subunits. Subunits NuoA, H, J, K, L, M, N constitute the membrane sector of the complex.

It localises to the cell inner membrane. The enzyme catalyses a quinone + NADH + 5 H(+)(in) = a quinol + NAD(+) + 4 H(+)(out). Functionally, NDH-1 shuttles electrons from NADH, via FMN and iron-sulfur (Fe-S) centers, to quinones in the respiratory chain. The immediate electron acceptor for the enzyme in this species is believed to be ubiquinone. Couples the redox reaction to proton translocation (for every two electrons transferred, four hydrogen ions are translocated across the cytoplasmic membrane), and thus conserves the redox energy in a proton gradient. This subunit may bind ubiquinone. This chain is NADH-quinone oxidoreductase subunit H 1, found in Koribacter versatilis (strain Ellin345).